The following is a 196-amino-acid chain: STLEVRSQATQDLSEYYNRPYFDLRNLSGYREGNTVTFINHYQQTDVKLEGKDKDKIKDGNNENLDVFVVREGSGRQADNNSIGGITKTNRTQHIDTVQNVNLLVSKSTGQHTTSVTSTNYSIYKEEISLKELDFKLRKHLIDKHDLYKTEPKDSKIRVTMKNGDFYTFELNKKLQTHRMGDVIDGRNIEKIEVNL.

A sialyl Lewis X-binding region spans residues 65 to 167 (LDVFVVREGS…RVTMKNGDFY (103 aa)).

The protein belongs to the staphylococcal/streptococcal toxin family. Homodimer (via its C-terminal domain). Interacts with host FCAR and SELPLG (via sialyl Lewis X).

Its subcellular location is the secreted. In terms of biological role, secreted protein that plays a role in the inhibition of host immune system. Targets myeloid cells such as monocytes or granulocytes through binding with sialyllactosamine-containing glycoproteins. Prevents initial rolling of neutrophils toward the site of infection by interacting with host SELPLG. Disrupts neutrophil motility by induction of cell adhesion via interacting with glycans but independently of SELPLG. The chain is Superantigen-like protein 11 from Staphylococcus aureus.